The following is a 381-amino-acid chain: Na(+)/H(+) antiporter NhaA 1 (381 aa).

Transmembrane regions (helical) follow at residues 18–38 (GLLL…SYSA), 53–73 (ITHW…GLEL), 89–109 (SLPI…FLAL), 118–138 (GAGI…SLLG), 147–167 (VFLT…IAVF), 170–190 (TSIG…LFVL), 210–230 (YFML…AFVI), 251–271 (PVAF…AIES), 283–303 (FGII…FSSI), 321–341 (ILGA…ITLL), and 348–368 (IIVF…ITGF).

The protein belongs to the NhaA Na(+)/H(+) (TC 2.A.33) antiporter family.

Its subcellular location is the cell inner membrane. It catalyses the reaction Na(+)(in) + 2 H(+)(out) = Na(+)(out) + 2 H(+)(in). Functionally, na(+)/H(+) antiporter that extrudes sodium in exchange for external protons. This is Na(+)/H(+) antiporter NhaA 1 from Flavobacterium johnsoniae (strain ATCC 17061 / DSM 2064 / JCM 8514 / BCRC 14874 / CCUG 350202 / NBRC 14942 / NCIMB 11054 / UW101) (Cytophaga johnsonae).